The sequence spans 346 residues: Uroporphyrinogen decarboxylase (346 aa).

Residues 26 to 30 (RQAGR), aspartate 76, tyrosine 153, serine 208, and histidine 323 each bind substrate.

This sequence belongs to the uroporphyrinogen decarboxylase family. Homodimer.

The protein resides in the cytoplasm. It catalyses the reaction uroporphyrinogen III + 4 H(+) = coproporphyrinogen III + 4 CO2. The protein operates within porphyrin-containing compound metabolism; protoporphyrin-IX biosynthesis; coproporphyrinogen-III from 5-aminolevulinate: step 4/4. Its function is as follows. Catalyzes the decarboxylation of four acetate groups of uroporphyrinogen-III to yield coproporphyrinogen-III. The protein is Uroporphyrinogen decarboxylase of Prochlorococcus marinus (strain MIT 9301).